Here is a 627-residue protein sequence, read N- to C-terminus: Monoterpene synthase like 1, chloroplastic (627 aa).

The N-terminal 50 residues, 1 to 50 (MDLISVLPSTSKSCVCMHKPLSSSTHKLKPFCRTIRILGMPRPRKSVLMA), are a transit peptide targeting the chloroplast. Residues aspartate 378, aspartate 382, and aspartate 530 each contribute to the Mg(2+) site. Residues 378–382 (DDMYD) carry the DDXXD motif motif.

This sequence belongs to the terpene synthase family. Tpsd subfamily. The cofactor is Mg(2+). Requires Mn(2+) as cofactor.

The protein resides in the plastid. It is found in the chloroplast. It functions in the pathway terpene metabolism; oleoresin biosynthesis. Its pathway is secondary metabolite biosynthesis; terpenoid biosynthesis. Functionally, monoterpene synthase (TPS) involved in the biosynthesis of monoterpene natural products included in conifer oleoresin secretions and volatile emissions; these compounds contribute to biotic and abiotic stress defense against herbivores and pathogens. This Pinus contorta (Shore pine) protein is Monoterpene synthase like 1, chloroplastic.